Reading from the N-terminus, the 441-residue chain is Tol-Pal system protein TolB (441 aa).

The signal sequence occupies residues 1 to 23; it reads MRNAIATVLLGLAMLLPVGAVQA. The segment at 420-441 is disordered; the sequence is RNLKPVKTPDGASDPSWSPLQN.

The protein belongs to the TolB family. As to quaternary structure, the Tol-Pal system is composed of five core proteins: the inner membrane proteins TolA, TolQ and TolR, the periplasmic protein TolB and the outer membrane protein Pal. They form a network linking the inner and outer membranes and the peptidoglycan layer.

The protein localises to the periplasm. Its function is as follows. Part of the Tol-Pal system, which plays a role in outer membrane invagination during cell division and is important for maintaining outer membrane integrity. This Ruegeria sp. (strain TM1040) (Silicibacter sp.) protein is Tol-Pal system protein TolB.